The primary structure comprises 239 residues: Leucyl/phenylalanyl-tRNA--protein transferase (239 aa).

This sequence belongs to the L/F-transferase family.

It is found in the cytoplasm. It catalyses the reaction N-terminal L-lysyl-[protein] + L-leucyl-tRNA(Leu) = N-terminal L-leucyl-L-lysyl-[protein] + tRNA(Leu) + H(+). It carries out the reaction N-terminal L-arginyl-[protein] + L-leucyl-tRNA(Leu) = N-terminal L-leucyl-L-arginyl-[protein] + tRNA(Leu) + H(+). The catalysed reaction is L-phenylalanyl-tRNA(Phe) + an N-terminal L-alpha-aminoacyl-[protein] = an N-terminal L-phenylalanyl-L-alpha-aminoacyl-[protein] + tRNA(Phe). Functionally, functions in the N-end rule pathway of protein degradation where it conjugates Leu, Phe and, less efficiently, Met from aminoacyl-tRNAs to the N-termini of proteins containing an N-terminal arginine or lysine. This Syntrophus aciditrophicus (strain SB) protein is Leucyl/phenylalanyl-tRNA--protein transferase.